Here is a 348-residue protein sequence, read N- to C-terminus: WRKY transcription factor WRKY71 (348 aa).

The stretch at Val50–Gln84 forms a coiled coil. 2 disordered regions span residues Ala91–His141 and Gly246–Val287. Over residues Asn102–Pro114 the composition is skewed to low complexity. Positions Arg116–Ser122 match the Nuclear localization signal motif. The span at Ser126–His136 shows a compositional bias: pro residues. The WRKY DNA-binding region spans Asp187 to Pro253. The tract at residues Ser267–Asp348 is transcription repression of gibberellic acid (GA)-induced promoters. Pro residues predominate over residues Pro275–Val286.

Belongs to the WRKY group II-a family. In terms of assembly, interacts with WRKY51; this interaction promotes W box binding of the complex WRKY51/WRKY71 in a zinc ion-dependent manner. Highly expressed in aleurone cells. In seeds, predominantly present in the plumule, radicle and scutellum of the embryo. Expressed in roots, stems, young leaves and spikelets.

Its subcellular location is the nucleus. In terms of biological role, transcription repressor. Interacts specifically with the W box (5'-(T)TGAC[CT]-3'), a frequently occurring elicitor-responsive cis-acting element. Represses specifically gibberellic acid (GA)-induced promoters in aleurone cells, probably by interfering with GAM1. Regulates, probably indirectly, the activation of defense-related genes such as GF14E during defense response. Modulates plant innate immunity against X.oryzae pv. oryzae (Xoo). Confers resistance to the virulent bacterial pathogen X.oryzae pv. oryzae (Xoo) 13751, probably via the regulation of NPR1 and PR1b defense signaling pathways. The protein is WRKY transcription factor WRKY71 of Oryza sativa subsp. indica (Rice).